Consider the following 208-residue polypeptide: Protein-L-isoaspartate O-methyltransferase (208 aa).

Ser59 is a catalytic residue.

It belongs to the methyltransferase superfamily. L-isoaspartyl/D-aspartyl protein methyltransferase family.

The protein resides in the cytoplasm. It catalyses the reaction [protein]-L-isoaspartate + S-adenosyl-L-methionine = [protein]-L-isoaspartate alpha-methyl ester + S-adenosyl-L-homocysteine. Functionally, catalyzes the methyl esterification of L-isoaspartyl residues in peptides and proteins that result from spontaneous decomposition of normal L-aspartyl and L-asparaginyl residues. It plays a role in the repair and/or degradation of damaged proteins. This Escherichia fergusonii (strain ATCC 35469 / DSM 13698 / CCUG 18766 / IAM 14443 / JCM 21226 / LMG 7866 / NBRC 102419 / NCTC 12128 / CDC 0568-73) protein is Protein-L-isoaspartate O-methyltransferase.